The chain runs to 142 residues: Hemoglobin subunit alpha (142 aa).

Position 1 is an N-acetylserine (serine 1). Residues 1–142 (SLSEKNKAAV…VALALADRYR (142 aa)) form the Globin domain. Histidine 59 contacts O2. Histidine 88 provides a ligand contact to heme b.

Belongs to the globin family. Heterotetramer of two alpha chains and two beta chains. Red blood cells.

Functionally, involved in oxygen transport from gills to the various peripheral tissues. This Pagothenia borchgrevinki (Bald rockcod) protein is Hemoglobin subunit alpha (hba).